The chain runs to 371 residues: ADP-ribosylarginine hydrolase Tri1 (371 aa).

The N-terminal extension stretch occupies residues 1 to 61; the sequence is MIDLRSPNAL…LQSRACTLTP (61 aa). Residues 70-362 are ADP-ribosyl hydrolase domain; the sequence is GALLGLAIGD…LFDRAPQVDE (293 aa). Mg(2+) is bound by residues Thr-112, Asp-113, Asp-114, Asp-157, and Asp-313.

It belongs to the ADP-ribosylglycohydrolase family. Mg(2+) serves as cofactor.

The enzyme catalyses N(omega)-(ADP-D-ribosyl)-L-arginyl-[protein] + H2O = ADP-D-ribose + L-arginyl-[protein]. Its function is as follows. Immunity component of an interbacterial competition system (also called effector-immunity systems). Expression in E.coli neutralizes the toxic effects of non-cognate S.proteamaculans effector protein Tre1 (Tre1-Sp); cannot be co-purified with Tre1-Sp from E.coli, suggesting they do not form a stable complex. Probably acts as an arginine mono-ADP-ribosylhydrolase, mediating the removal of mono-ADP-ribose attached to arginine residues on proteins. Probably de-ADP-ribosylates FtsZ and possibly other proteins; the ability to hydrolyze ADP-ribosyl moieties is not essential for neutralization of its cognate toxin, strongly suggesting its N-terminal extension occludes the active site of cognate toxin Tre1. The polypeptide is ADP-ribosylarginine hydrolase Tri1 (Pseudomonas putida (strain GB-1)).